Here is a 552-residue protein sequence, read N- to C-terminus: Histone deacetylase 15 (552 aa).

A RanBP2-type zinc finger spans residues 86–115 (EFVKWCCVNCTMSNPGDMVHCCICGEHKES). Residues 149 to 462 (STAVGFDERM…ATAVIKVLLG (314 aa)) are histone deacetylase. His277 serves as the catalytic Proton donor/acceptor. The Zn(2+) site is built by Asp313, His315, and Asp404.

Belongs to the histone deacetylase family. HD type 2 subfamily. In terms of assembly, interacts with PIF3 in the dark. Interacts with HY5. Interacts with MYB96. Forms homotetramers. It depends on Zn(2+) as a cofactor. Expressed in stems, leaves, flowers, siliques and mature seeds.

It localises to the nucleus. Its subcellular location is the cytoplasm. The catalysed reaction is N(6)-acetyl-L-lysyl-[histone] + H2O = L-lysyl-[histone] + acetate. With respect to regulation, inhibited by trichostatin A (TSA), a well-known histone deacetylase inhibitor. Its function is as follows. Responsible for the deacetylation of lysine residues on the N-terminal part of the core histones (H2A, H2B, H3 and H4). Histone deacetylation gives a tag for epigenetic repression and plays an important role in transcriptional regulation, cell cycle progression and developmental events. Histone deacetylases act via the formation of large multiprotein complexes. Represses chlorophyll biosynthesis and photosynthesis in the dark. Is recruited by PIF3 to the promoters of chlorophyll biosynthetic and photosynthetic genes, and represses their transcription by histone deacetylation. Involved in the repression of hypocotyl cell elongation to promote photomorphogenesis. Is recruited by HY5 to the promoters of a subset of cell wall organization and auxin signaling-related genes, and represses gene expression by decreasing the levels of histone H4 acetylation in a light-dependent manner. Promotes abscisic acid (ABA) signaling. Is recruited by MYB96 to the promoters of a subset of Rho GTPase (ROP) genes, which repress ABA signaling at the early stages of signal transduction. Represses ROP expression by removing acetyl groups of histone H3 and H4 from the cognate regions, particularly in the presence of ABA. Represses the plant response to elevated ambient temperature by directly repressing warm temperature-responsive genes. The chain is Histone deacetylase 15 from Arabidopsis thaliana (Mouse-ear cress).